A 298-amino-acid chain; its full sequence is 4-hydroxy-tetrahydrodipicolinate synthase (298 aa).

Thr51 contacts pyruvate. Catalysis depends on Tyr139, which acts as the Proton donor/acceptor. The Schiff-base intermediate with substrate role is filled by Lys167. Pyruvate is bound at residue Ile209.

Belongs to the DapA family. Homotetramer; dimer of dimers.

It localises to the cytoplasm. The enzyme catalyses L-aspartate 4-semialdehyde + pyruvate = (2S,4S)-4-hydroxy-2,3,4,5-tetrahydrodipicolinate + H2O + H(+). The protein operates within amino-acid biosynthesis; L-lysine biosynthesis via DAP pathway; (S)-tetrahydrodipicolinate from L-aspartate: step 3/4. Functionally, catalyzes the condensation of (S)-aspartate-beta-semialdehyde [(S)-ASA] and pyruvate to 4-hydroxy-tetrahydrodipicolinate (HTPA). The sequence is that of 4-hydroxy-tetrahydrodipicolinate synthase from Haemophilus influenzae (strain 86-028NP).